A 213-amino-acid polypeptide reads, in one-letter code: Motile sperm domain-containing protein 1 (213 aa).

The MSP domain occupies 16-143 (PVFVFPTELI…KEHLTESLFF (128 aa)). 2 consecutive transmembrane segments (helical) span residues 159–179 (SLLT…PTLG) and 191–211 (LSVN…MAIL). The short motif at 205–208 (LITM) is the Nuclear export signal element.

It is found in the endoplasmic reticulum membrane. It localises to the golgi apparatus membrane. Its function is as follows. Plays a role in differentiation and/or proliferation of mesenchymal stem cells. Proposed to be involved in epithelial-to-mesenchymal transition (EMT). However, another study suggests that it is not required for EMT or stem cell self-renewal and acts during later stages of differentiation. This chain is Motile sperm domain-containing protein 1 (MOSPD1), found in Pongo abelii (Sumatran orangutan).